The sequence spans 364 residues: Cobalt-precorrin-5B C(1)-methyltransferase (364 aa).

The protein belongs to the CbiD family.

The catalysed reaction is Co-precorrin-5B + S-adenosyl-L-methionine = Co-precorrin-6A + S-adenosyl-L-homocysteine. The protein operates within cofactor biosynthesis; adenosylcobalamin biosynthesis; cob(II)yrinate a,c-diamide from sirohydrochlorin (anaerobic route): step 6/10. Its function is as follows. Catalyzes the methylation of C-1 in cobalt-precorrin-5B to form cobalt-precorrin-6A. This Pseudomonas entomophila (strain L48) protein is Cobalt-precorrin-5B C(1)-methyltransferase.